Here is a 395-residue protein sequence, read N- to C-terminus: Putative carbonic anhydrase 1 (395 aa).

Positions 1 to 24 (MKLQGAGCVVAAVLGALFIVNVES) are cleaved as a signal peptide. One can recognise an Alpha-carbonic anhydrase domain in the interval 42-365 (ISYDVRSTIG…LNDRPVFLVR (324 aa)). 3 residues coordinate Zn(2+): histidine 139, histidine 141, and histidine 165.

The protein belongs to the alpha-carbonic anhydrase family. The cofactor is Zn(2+). In terms of tissue distribution, component of the acid-insoluble and acid-soluble organic matrix of calcified layers of the shell (at protein level).

The protein resides in the secreted. The enzyme catalyses hydrogencarbonate + H(+) = CO2 + H2O. Reversible hydration of carbon dioxide. The polypeptide is Putative carbonic anhydrase 1 (Lottia gigantea (Giant owl limpet)).